Here is a 413-residue protein sequence, read N- to C-terminus: 2,3-diketo-5-methylthiopentyl-1-phosphate enolase (413 aa).

The active-site Proton acceptor is the lysine 98. Substrate contacts are provided by residues lysine 147, 173-176 (KDDE), histidine 264, glycine 337, and 359-360 (GG). Mg(2+) is bound by residues lysine 173, aspartate 175, and glutamate 176. Residue lysine 173 is modified to N6-carboxylysine.

It belongs to the RuBisCO large chain family. Type IV subfamily. As to quaternary structure, homodimer. The cofactor is Mg(2+).

The catalysed reaction is 5-methylsulfanyl-2,3-dioxopentyl phosphate = 2-hydroxy-5-methylsulfanyl-3-oxopent-1-enyl phosphate. It participates in amino-acid biosynthesis; L-methionine biosynthesis via salvage pathway; L-methionine from S-methyl-5-thio-alpha-D-ribose 1-phosphate: step 3/6. Functionally, catalyzes the enolization of 2,3-diketo-5-methylthiopentyl-1-phosphate (DK-MTP-1-P) into 2-hydroxy-3-keto-5-methylthiopentenyl-1-phosphate (HK-MTPenyl-1-P). This chain is 2,3-diketo-5-methylthiopentyl-1-phosphate enolase (mtnW), found in Geobacillus kaustophilus (strain HTA426).